The primary structure comprises 80 residues: Beta-toxin KAaH2 (80 aa).

An N-terminal signal peptide occupies residues 1–22 (MMKLMLFSIIVILFSLIGSIHG). One can recognise an LCN-type CS-alpha/beta domain in the interval 25 to 80 (VPGNYPLDSSDDTYLCAPLGENPSCIQICRKHGVKYGYCYAFQCWCEYLEDKNVKI). 3 disulfides stabilise this stretch: Cys40–Cys63, Cys49–Cys68, and Cys53–Cys70.

It belongs to the long (3 C-C) scorpion toxin superfamily. Sodium/Potassium channel inhibitor family. As to expression, expressed by the venom gland.

The protein localises to the secreted. Functionally, weakly inhibits the vertebrate potassium channel Kv1.1/KCNA1. The protein is Beta-toxin KAaH2 of Androctonus australis (Sahara scorpion).